The primary structure comprises 1222 residues: Serine/threonine-protein kinase WNK4 (1222 aa).

Residues 1-17 are compositionally biased toward polar residues; the sequence is MLAPRNTETGVHMSQTE. The interval 1 to 163 is disordered; that stretch reads MLAPRNTETG…KEDTETQAVA (163 aa). The residue at position 95 (Ser95) is a Phosphoserine. The segment covering 135–152 has biased composition (basic and acidic residues); the sequence is EPPRVPDAAARERRREQE. Glycyl lysine isopeptide (Lys-Gly) (interchain with G-Cter in ubiquitin) cross-links involve residues Lys154 and Lys172. A Protein kinase domain is found at 171–429; sequence LKFDIEIGRG…IQDLLTHAFF (259 aa). Ser181 is an ATP binding site. Residues Lys183, Lys223, and Lys238 each participate in a glycyl lysine isopeptide (Lys-Gly) (interchain with G-Cter in ubiquitin) cross-link. Residues 251–254 and Lys301 each bind ATP; that span reads TELM. The active-site Proton acceptor is the Asp318. Residue Lys325 forms a Glycyl lysine isopeptide (Lys-Gly) (interchain with G-Cter in ubiquitin) linkage. A phosphoserine; by autocatalysis mark is found at Ser328 and Ser332. Residues Lys384, Lys390, Lys447, and Lys451 each participate in a glycyl lysine isopeptide (Lys-Gly) (interchain with G-Cter in ubiquitin) cross-link. The interval 527 to 562 is disordered; the sequence is LEVLPPDSGPPPATVSMTPGPPSAFPPEPEEPEADQ. Residues 533–553 are compositionally biased toward pro residues; sequence DSGPPPATVSMTPGPPSAFPP. The interaction with KLHL3 stretch occupies residues 554–564; the sequence is EPEEPEADQHQ. Position 572 is a phosphoserine (Ser572). Disordered stretches follow at residues 591 to 612, 626 to 679, 747 to 809, 836 to 873, and 927 to 1087; these read FLDASDPALQPPGGMPSSPAEP, RSGP…SVSD, DAGP…GTPF, QVSSNPCPQAPSSLLPSSSGASQVPFPSPSLPTSSPLP, and SPGL…QPSP. A compositionally biased stretch (low complexity) spans 627–638; it reads SGPGSDFSPGDS. Basic residues predominate over residues 659–672; sequence NPVKTLRRRPRSRL. Low complexity-rich tracts occupy residues 792-809 and 845-873; these read FSTSPSSPGTPLSPGTPF and APSSLLPSSSGASQVPFPSPSLPTSSPLP. A compositionally biased stretch (pro residues) spans 935-946; it reads PPAPPGPLPSMP. Positions 953-963 are enriched in polar residues; it reads DQESLSAQTAE. Residue Lys990 forms a Glycyl lysine isopeptide (Lys-Gly) (interchain with G-Cter in ubiquitin) linkage. The RFXV motif motif lies at 996 to 999; that stretch reads RFQV. Residue Ser1014 is modified to Phosphoserine. Positions 1044–1056 are enriched in basic and acidic residues; it reads ETREALAESDRAA. A compositionally biased stretch (polar residues) spans 1076 to 1086; it reads GGSSPILSQPS. Residues Lys1123, Lys1136, and Lys1137 each participate in a glycyl lysine isopeptide (Lys-Gly) (interchain with G-Cter in ubiquitin) cross-link. The interval 1169–1222 is disordered; the sequence is SKGSFPTSRRNSLQRSDLPGPGIMRRNSLSGSSTGSQEQRASKGVTFAGDVGRM. 2 stretches are compositionally biased toward polar residues: residues 1172 to 1183 and 1195 to 1207; these read SFPTSRRNSLQR and NSLSGSSTGSQEQ. Residue Ser1196 is modified to Phosphoserine.

This sequence belongs to the protein kinase superfamily. Ser/Thr protein kinase family. WNK subfamily. In terms of assembly, interacts with the C-terminal region of KCNJ1. Interacts with WNK1 and WNK3. Interacts with KLHL3. It depends on Mg(2+) as a cofactor. Post-translationally, autophosphorylated at Ser-328 and Ser-332, promoting its activation. Phosphorylated by WNK1 and WNK3. Phosphorylated at Ser-572 in a MAP3K15/ASK3-dependent process in response to osmotic stress or hypotonic low-chloride stimulation. Ubiquitinated by the BCR(KLHL3) complex, leading to its degradation. Also ubiquitinated by the BCR(KLHL2) complex.

It is found in the cell junction. It localises to the tight junction. It catalyses the reaction L-seryl-[protein] + ATP = O-phospho-L-seryl-[protein] + ADP + H(+). The enzyme catalyses L-threonyl-[protein] + ATP = O-phospho-L-threonyl-[protein] + ADP + H(+). Its activity is regulated as follows. Activation requires autophosphorylation of Ser-328 and Ser-332. Autophosphorylation and subsequent activation is inhibited by increases in intracellular ionic strength: Cl(-) potently inhibits WNK4 kinase activity via direct binding. Also inhibited by K(+) ions. Serine/threonine-protein kinase component of the WNK4-SPAK/OSR1 kinase cascade, which acts as a key regulator of ion transport in the distal nephron and blood pressure. The WNK4-SPAK/OSR1 kinase cascade is composed of WNK4, which mediates phosphorylation and activation of downstream kinases OXSR1/OSR1 and STK39/SPAK. Following activation, OXSR1/OSR1 and STK39/SPAK catalyze phosphorylation of ion cotransporters, such as SLC12A1/NKCC2, SLC12A2/NKCC1, SLC12A3/NCC, SLC12A5/KCC2 or SLC12A6/KCC3, regulating their activity. Acts as a molecular switch that regulates the balance between renal salt reabsorption and K(+) secretion by modulating the activities of renal transporters and channels, including the Na-Cl cotransporter SLC12A3/NCC and the K(+) channel, KCNJ1/ROMK. Regulates NaCl reabsorption in the distal nephron by activating the thiazide-sensitive Na-Cl cotransporter SLC12A3/NCC in distal convoluted tubule cells of kidney: activates SLC12A3/NCC in a OXSR1/OSR1- and STK39/SPAK-dependent process. Also acts as a scaffold protein independently of its protein kinase activity: negatively regulates cell membrane localization of various transporters and channels (CFTR, KCNJ1/ROMK, SLC4A4, SLC26A9 and TRPV4) by clathrin-dependent endocytosis. Also inhibits the activity of the epithelial Na(+) channel (ENaC) SCNN1A, SCNN1B, SCNN1D in a inase-independent mechanism. May also phosphorylate NEDD4L. This chain is Serine/threonine-protein kinase WNK4, found in Rattus norvegicus (Rat).